Here is a 577-residue protein sequence, read N- to C-terminus: Methionine--tRNA ligase (577 aa).

The 'HIGH' region signature appears at 21 to 31 (PYANGPLHVGH). Zn(2+) is bound by residues Cys153, Cys156, Cys166, and Cys169. Positions 355–359 (QMSTS) match the 'KMSKS' region motif. Thr358 is an ATP binding site.

Belongs to the class-I aminoacyl-tRNA synthetase family. MetG type 1 subfamily. As to quaternary structure, monomer. Zn(2+) serves as cofactor.

It is found in the cytoplasm. It catalyses the reaction tRNA(Met) + L-methionine + ATP = L-methionyl-tRNA(Met) + AMP + diphosphate. Functionally, is required not only for elongation of protein synthesis but also for the initiation of all mRNA translation through initiator tRNA(fMet) aminoacylation. This is Methionine--tRNA ligase from Rubrobacter xylanophilus (strain DSM 9941 / JCM 11954 / NBRC 16129 / PRD-1).